The chain runs to 148 residues: [Ribosomal protein bS18]-alanine N-acetyltransferase (148 aa).

An N-acetyltransferase domain is found at 2–147 (NTISSLETTD…DAIIMALPIS (146 aa)). Residue 69–71 (IAV) coordinates acetyl-CoA. The active-site Proton acceptor is the Glu103. Asn108 contributes to the acetyl-CoA binding site. Catalysis depends on Tyr115, which acts as the Proton donor.

This sequence belongs to the acetyltransferase family. RimI subfamily.

The protein resides in the cytoplasm. The catalysed reaction is N-terminal L-alanyl-[ribosomal protein bS18] + acetyl-CoA = N-terminal N(alpha)-acetyl-L-alanyl-[ribosomal protein bS18] + CoA + H(+). Its function is as follows. Acetylates the N-terminal alanine of ribosomal protein bS18. The sequence is that of [Ribosomal protein bS18]-alanine N-acetyltransferase from Escherichia coli O157:H7.